A 334-amino-acid chain; its full sequence is Nucleoid-associated protein YPTS_1390 (334 aa).

Belongs to the YejK family.

The protein localises to the cytoplasm. The protein resides in the nucleoid. This chain is Nucleoid-associated protein YPTS_1390, found in Yersinia pseudotuberculosis serotype IB (strain PB1/+).